The sequence spans 161 residues: Putative ecotin-like protein (161 aa).

An N-terminal signal peptide occupies residues 1 to 24; it reads MSLRPIETAIASLTMLMLQGCAHA.

Belongs to the protease inhibitor I11 (ecotin) family.

This chain is Putative ecotin-like protein, found in Methylobacillus flagellatus (strain ATCC 51484 / DSM 6875 / VKM B-1610 / KT).